Here is a 188-residue protein sequence, read N- to C-terminus: Peptidyl-tRNA hydrolase (188 aa).

Y14 is a binding site for tRNA. H19 acts as the Proton acceptor in catalysis. Y64, N66, and N112 together coordinate tRNA.

It belongs to the PTH family. In terms of assembly, monomer.

It localises to the cytoplasm. It carries out the reaction an N-acyl-L-alpha-aminoacyl-tRNA + H2O = an N-acyl-L-amino acid + a tRNA + H(+). Hydrolyzes ribosome-free peptidyl-tRNAs (with 1 or more amino acids incorporated), which drop off the ribosome during protein synthesis, or as a result of ribosome stalling. Its function is as follows. Catalyzes the release of premature peptidyl moieties from peptidyl-tRNA molecules trapped in stalled 50S ribosomal subunits, and thus maintains levels of free tRNAs and 50S ribosomes. This Leuconostoc mesenteroides subsp. mesenteroides (strain ATCC 8293 / DSM 20343 / BCRC 11652 / CCM 1803 / JCM 6124 / NCDO 523 / NBRC 100496 / NCIMB 8023 / NCTC 12954 / NRRL B-1118 / 37Y) protein is Peptidyl-tRNA hydrolase.